Here is a 143-residue protein sequence, read N- to C-terminus: Subtelomeric hrmA-associated cluster protein cgnA (143 aa).

29 G-Q-I/R/S repeats span residues Gly-11–Ile-13, Gly-14–Ile-16, Gly-17–Arg-19, Gly-20–Ser-22, Gly-23–Arg-25, Gly-26–Ser-28, Gly-29–Arg-31, Gly-32–Ser-34, Gly-35–Ile-37, Gly-38–Ser-40, Gly-41–Ser-43, Gly-44–Ser-46, Gly-47–Ile-49, Gly-50–Ile-52, Gly-53–Ile-55, Gly-56–Ile-58, Gly-59–Ile-61, Gly-62–Ile-64, Gly-65–Ile-67, Gly-68–Ile-70, Gly-71–Ile-73, Gly-74–Ile-76, Gly-77–Ile-79, Gly-80–Ile-82, Gly-83–Ile-85, Gly-86–Ile-88, Gly-89–Ile-91, Gly-92–Ile-94, and Gly-95–Ala-97. Positions Gly-11 to Gly-68 constitute a Collagen-like domain. A 29 X 3 AA approximate tandem repeats of G-Q-I/R/S region spans residues Gly-11–Ala-97. The disordered stretch occupies residues Ile-16 to Ile-49.

The protein resides in the secreted. Collagen-like protein; part of the subtelomeric hrmA-associated cluster (HAC) containing genes that alter the hyphal surface (such as reduced total chitin or increased beta-glucan exposure) and perturb inter-hyphal interactions within the developing biofilms, resulting in a loss of vertically aligned polarized growing filaments. Consequently, this hypoxia-typic morphotype (called H-MORPH) with altered biofilm architecture leads to increased hypoxia fitness, increased host inflammation, rapid disease progression, and mortality in a murine model of invasive aspergillosis. CgnA is directly involved in the reduction of total surface chitin and the increase of beta-glucan exposure, and mediates the detachment of the extracellular matrix and especially of its component galactosaminogalactan (GAG). The sequence is that of Subtelomeric hrmA-associated cluster protein cgnA from Aspergillus fumigatus (strain ATCC MYA-4609 / CBS 101355 / FGSC A1100 / Af293) (Neosartorya fumigata).